Consider the following 616-residue polypeptide: Protein LNK1 (616 aa).

4 disordered regions span residues 72–112, 361–398, 410–434, and 567–616; these read GKNP…HGFN, ESKS…GPTV, ANLL…KTDS, and SSLS…SDNN. Positions 371–395 are enriched in polar residues; sequence KPSPSSASNESYTSNHAQSIESLQG. Residues 567–577 show a composition bias toward low complexity; that stretch reads SSLSSDNNVLS. Residues 594–608 are compositionally biased toward basic and acidic residues; it reads RIEKQEETTELRPEA.

As to quaternary structure, interacts with CCA1, LHY, REV4 and REV8, but not with PRR7 or PRR9. As to expression, expressed in roots, stems, leaves, seedlings, cotyledons, inflorescences and siliques. Highest expression in root tips, young leaves and vasculatur tissues.

The protein localises to the nucleus. In terms of biological role, transcriptional coactivator necessary for expression of the clock genes PRR5 and TOC1. Antagonizes REV8 function in the regulation of anthocyanin accumulation. Involved in red light input to the clock. Activates clock-controlled genes with afternoon peak. Mediates light inhibition of hypocotyl elongation. The protein is Protein LNK1 of Arabidopsis thaliana (Mouse-ear cress).